Reading from the N-terminus, the 340-residue chain is Terpene synthase 29 (340 aa).

Aspartate 132, glutamate 197, asparagine 257, serine 261, and glutamate 265 together coordinate Mg(2+). Residues 132–138 (DEPDILE) carry the DDXXXXD motif motif. The NSE/DTE motif motif lies at 257 to 265 (NDILSFYKE).

This sequence belongs to the trichodiene synthase family. The cofactor is Mg(2+).

Its function is as follows. Terpene cyclase that catalyzes the cyclization of farnesyl diphosphate (FPP) to a single major terpene scaffold whose chemical structure is still unknown. The protein is Terpene synthase 29 of Postia placenta (strain ATCC 44394 / Madison 698-R) (Brown rot fungus).